A 252-amino-acid polypeptide reads, in one-letter code: Chitooligosaccharide deacetylase (252 aa).

The Mg(2+) site is built by H61 and H125.

This sequence belongs to the YdjC deacetylase family. ChbG subfamily. As to quaternary structure, homodimer. The cofactor is Mg(2+).

The protein localises to the cytoplasm. The catalysed reaction is N,N'-diacetylchitobiose + H2O = N-acetyl-beta-D-glucosaminyl-(1-&gt;4)-D-glucosamine + acetate. It carries out the reaction diacetylchitobiose-6'-phosphate + H2O = N'-monoacetylchitobiose-6'-phosphate + acetate. The protein operates within glycan degradation; chitin degradation. In terms of biological role, involved in the degradation of chitin. ChbG is essential for growth on the acetylated chitooligosaccharides chitobiose and chitotriose but is dispensable for growth on cellobiose and chitosan dimer, the deacetylated form of chitobiose. Deacetylation of chitobiose-6-P and chitotriose-6-P is necessary for both the activation of the chb promoter by the regulatory protein ChbR and the hydrolysis of phosphorylated beta-glucosides by the phospho-beta-glucosidase ChbF. Catalyzes the removal of only one acetyl group from chitobiose-6-P to yield monoacetylchitobiose-6-P, the inducer of ChbR and the substrate of ChbF. In Salmonella typhimurium (strain LT2 / SGSC1412 / ATCC 700720), this protein is Chitooligosaccharide deacetylase.